The sequence spans 416 residues: MSTQTVTIKSLGAQGDGIAHCPDGPVYVPFALPGETVAIAKVKDQGTVMSITEASADRRDPVCRHFGPEGINGTCGGCSLQHLADQPYHAFKRELVVSALRSKGLTPPVDDLVICRPGERRRAVFAARKTEKGLLLGFSQANSHHIVAIEECPVTSPGIVSRFDAIRAIGLSMVANAEPFRITVLETLSGLDISVEGIKSVNDKQRRTLTETVLAMRGIARVSLSGEILIEPQKPIIEFGGIPVSPPAGGFTQATKQAEDAMAELMLAHVGKSKRIADLFCGSGTFALRLARIGRVHAVEAEDKALKALDFAARNTQGLKPVSVEKRDLFRRPLMTSELKNYDAVVFDPPRAGAEVQCKELARSTVKKIVAVSCNPLTLARDLAILTEGGYRVTRVTPVDQFLWSPHVEAVAVLEK.

Residues cysteine 63, cysteine 75, cysteine 78, and cysteine 152 each coordinate [4Fe-4S] cluster. Glutamine 253, phenylalanine 280, glutamate 300, and aspartate 348 together coordinate S-adenosyl-L-methionine. Residue cysteine 374 is the Nucleophile of the active site.

It belongs to the class I-like SAM-binding methyltransferase superfamily. RNA M5U methyltransferase family.

This is an uncharacterized protein from Agrobacterium fabrum (strain C58 / ATCC 33970) (Agrobacterium tumefaciens (strain C58)).